The sequence spans 1207 residues: DNA-directed RNA polymerase subunit beta' (1207 aa).

C60, C62, C75, and C78 together coordinate Zn(2+). D450, D452, and D454 together coordinate Mg(2+). The Zn(2+) site is built by C819, C893, C900, and C903.

This sequence belongs to the RNA polymerase beta' chain family. The RNAP catalytic core consists of 2 alpha, 1 beta, 1 beta' and 1 omega subunit. When a sigma factor is associated with the core the holoenzyme is formed, which can initiate transcription. Requires Mg(2+) as cofactor. Zn(2+) is required as a cofactor.

The catalysed reaction is RNA(n) + a ribonucleoside 5'-triphosphate = RNA(n+1) + diphosphate. Functionally, DNA-dependent RNA polymerase catalyzes the transcription of DNA into RNA using the four ribonucleoside triphosphates as substrates. The protein is DNA-directed RNA polymerase subunit beta' of Streptococcus pyogenes serotype M3 (strain ATCC BAA-595 / MGAS315).